A 337-amino-acid polypeptide reads, in one-letter code: Heat-inducible transcription repressor HrcA (337 aa).

This sequence belongs to the HrcA family.

Functionally, negative regulator of class I heat shock genes (grpE-dnaK-dnaJ and groELS operons). Prevents heat-shock induction of these operons. The protein is Heat-inducible transcription repressor HrcA of Nocardioides sp. (strain ATCC BAA-499 / JS614).